The primary structure comprises 517 residues: Serine O-succinyltransferase (517 aa).

A mitochondrion-targeting transit peptide spans 1-46; sequence MSPLNGVARSFPRPFQAVTRRPFRVVQPAIACPSNSRSFNHSRSLR. The span at 36–64 shows a compositional bias: polar residues; the sequence is SRSFNHSRSLRSTGSQSPAPSPRDSSNPA. Residues 36 to 66 form a disordered region; it reads SRSFNHSRSLRSTGSQSPAPSPRDSSNPALS. The 253-residue stretch at 134–386 folds into the AB hydrolase-1 domain; the sequence is NVILLHTGLS…LTQQLATKKQ (253 aa). Positions 141–144 are important for substrate specificity; sequence GLSA. Catalysis depends on serine 238, which acts as the Nucleophile. Residue arginine 307 coordinates substrate. Positions 413–436 are disordered; the sequence is QPYQEQPSASTSAEQSASASETGS. A compositionally biased stretch (low complexity) spans 416–436; it reads QEQPSASTSAEQSASASETGS. Catalysis depends on residues aspartate 461 and histidine 498. Aspartate 499 is a binding site for substrate.

The protein belongs to the AB hydrolase superfamily. MetX family.

Its subcellular location is the mitochondrion. It carries out the reaction succinyl-CoA + L-serine = O-succinyl-L-serine + CoA. Its pathway is amino-acid biosynthesis; L-cysteine biosynthesis; L-cysteine from L-serine: step 1/2. Its function is as follows. Transfers a succinyl group from succinyl-CoA to L-serine, forming succinyl-L-serine. Also has weak serine acetyl transferase activity and homoserine succinyl transferase activity. The sequence is that of Serine O-succinyltransferase from Emericella nidulans (strain FGSC A4 / ATCC 38163 / CBS 112.46 / NRRL 194 / M139) (Aspergillus nidulans).